The following is a 441-amino-acid chain: N-succinylarginine dihydrolase (441 aa).

Substrate is bound by residues A19 to S28, N110, and H137 to R138. The active site involves E174. R212 is a substrate binding site. The active site involves H248. Residues D250 and N359 each contribute to the substrate site. C365 functions as the Nucleophile in the catalytic mechanism.

This sequence belongs to the succinylarginine dihydrolase family. Homodimer.

The catalysed reaction is N(2)-succinyl-L-arginine + 2 H2O + 2 H(+) = N(2)-succinyl-L-ornithine + 2 NH4(+) + CO2. It functions in the pathway amino-acid degradation; L-arginine degradation via AST pathway; L-glutamate and succinate from L-arginine: step 2/5. In terms of biological role, catalyzes the hydrolysis of N(2)-succinylarginine into N(2)-succinylornithine, ammonia and CO(2). In Cronobacter sakazakii (strain ATCC BAA-894) (Enterobacter sakazakii), this protein is N-succinylarginine dihydrolase.